A 258-amino-acid polypeptide reads, in one-letter code: Indole-3-glycerol phosphate synthase (258 aa).

Belongs to the TrpC family.

The catalysed reaction is 1-(2-carboxyphenylamino)-1-deoxy-D-ribulose 5-phosphate + H(+) = (1S,2R)-1-C-(indol-3-yl)glycerol 3-phosphate + CO2 + H2O. It participates in amino-acid biosynthesis; L-tryptophan biosynthesis; L-tryptophan from chorismate: step 4/5. This Geobacillus kaustophilus (strain HTA426) protein is Indole-3-glycerol phosphate synthase.